Reading from the N-terminus, the 185-residue chain is Ribosome-recycling factor (185 aa).

The interval 143 to 163 (EKEKLISEDDNKKGMDDIQKE) is disordered.

It belongs to the RRF family.

The protein resides in the cytoplasm. Responsible for the release of ribosomes from messenger RNA at the termination of protein biosynthesis. May increase the efficiency of translation by recycling ribosomes from one round of translation to another. The polypeptide is Ribosome-recycling factor (Syntrophomonas wolfei subsp. wolfei (strain DSM 2245B / Goettingen)).